Consider the following 317-residue polypeptide: WD repeat-containing protein 82 (317 aa).

WD repeat units lie at residues 21-60, 107-146, 148-186, 194-233, 238-278, and 282-317; these read ENTD…QSRT, GHTK…CQGL, HLSG…KGPF, EKEC…PLQT, PNNK…KVSV, and DHPG…EEGL.

Belongs to the WD repeat SWD2 family. As to quaternary structure, component of the SET1 complex, composed at least of the catalytic subunit Set1, wds/WDR5, Wdr82, Rbbp5, ash2, Cfp1/CXXC1, hcf and Dpy-30L1. Interacts with male-specific lethal (MSL) histone acetyltransferase complex at least composed of mof, msl-1, msl-2 and msl-3. Interacts with su(sable).

It is found in the nucleus. Functionally, component of the SET1 complex that specifically di- and trimethylates 'Lys-4' of histone H3. Together with su(sable), part of a transcription termination checkpoint that promotes transcription termination of aberrant RNAs and their subsequent degradation by the nuclear exosome. The protein is WD repeat-containing protein 82 of Drosophila melanogaster (Fruit fly).